A 351-amino-acid chain; its full sequence is L-threonine 3-dehydrogenase (351 aa).

Zn(2+) is bound at residue Cys-39. Residues Thr-41 and His-44 each act as charge relay system in the active site. 6 residues coordinate Zn(2+): His-64, Glu-65, Cys-94, Cys-97, Cys-100, and Cys-108. NAD(+)-binding positions include Ile-176, Asp-196, Arg-201, 271–273 (LGI), and 295–296 (IY).

This sequence belongs to the zinc-containing alcohol dehydrogenase family. Homotetramer. Requires Zn(2+) as cofactor.

The protein localises to the cytoplasm. The enzyme catalyses L-threonine + NAD(+) = (2S)-2-amino-3-oxobutanoate + NADH + H(+). Its pathway is amino-acid degradation; L-threonine degradation via oxydo-reductase pathway; glycine from L-threonine: step 1/2. Catalyzes the NAD(+)-dependent oxidation of L-threonine to 2-amino-3-ketobutyrate. The protein is L-threonine 3-dehydrogenase of Francisella philomiragia subsp. philomiragia (strain ATCC 25017 / CCUG 19701 / FSC 153 / O#319-036).